Consider the following 152-residue polypeptide: Complexin (152 aa).

The disordered stretch occupies residues 1–119 (MAAFIAKQMV…EEEDDDEFAK (119 aa)). A compositionally biased stretch (acidic residues) spans 23–39 (DEGEKEGNENAEEEAAA). Composition is skewed to basic and acidic residues over residues 41–82 (EEAR…VKEE) and 90–104 (DEGR…KEEL). Residues 59-75 (EEEREEMRQTIRDKYGL) form an interaction with the SNARE complex region. At C149 the chain carries Cysteine methyl ester. Residue C149 is the site of S-farnesyl cysteine attachment. Residues 150 to 152 (SLQ) constitute a propeptide, removed in mature form.

Belongs to the complexin/synaphin family. Binds to the SNARE core complex containing SNAP25, synaptobrevin and syntaxin-1.

Its subcellular location is the membrane. It localises to the cytoplasm. It is found in the cytosol. Positively regulates a late step in synaptic vesicle exocytosis. This chain is Complexin (cpx), found in Doryteuthis pealeii (Longfin inshore squid).